A 321-amino-acid chain; its full sequence is MGAFALFAVLAMAVTMAVAEQCGSQAGGATCPNCLCCSRFGWCGSTSDYCGDGCQSQCAGCGGGGTPVTPTPTPSGGGGVSSIVSRALFDRMLLHRNDGACQAKGFYTYDAFVAAAGAFPGFGTTGSTDTRKREVAAFLAQTSHETTGGWATAPDGAFAWGYCFKQERGATSNYCTPSAQWPCAPGKSYYGRGPIQLSHNYNYGPAGRAIGVDLLRNPDLVATDPTVSFKTAMWFWMTAQAPKPSSHAVITGQWSPSGTDRAAGRVPGFGVITNIVNGGIECGHGQDSRVADRIGFYKRYCDILRVGYGNNLDCYNQRPFA.

Residues 1–19 (MGAFALFAVLAMAVTMAVA) form the signal peptide. The region spanning 20-60 (EQCGSQAGGATCPNCLCCSRFGWCGSTSDYCGDGCQSQCAG) is the Chitin-binding type-1 domain. 5 cysteine pairs are disulfide-bonded: C22–C37, C31–C43, C34–C61, C36–C50, and C54–C58. Positions 62-79 (GGGGTPVTPTPTPSGGGG) are hinge region (Gly/Pro/Thr-rich). The catalytic stretch occupies residues 80–321 (VSSIVSRALF…LDCYNQRPFA (242 aa)). 3 disulfides stabilise this stretch: C101-C163, C175-C183, and C301-C314. E145 (proton donor) is an active-site residue.

The protein belongs to the glycosyl hydrolase 19 family. Chitinase class I subfamily. Localized in the aleurone cells of the seed endosperm (at protein level).

The catalysed reaction is Random endo-hydrolysis of N-acetyl-beta-D-glucosaminide (1-&gt;4)-beta-linkages in chitin and chitodextrins.. Its function is as follows. Defense against chitin-containing fungal pathogens. Binds the hyphal tips, lateral walls and septa of fungi and degrades mature chitin. In Secale cereale (Rye), this protein is Basic endochitinase A.